The following is a 1144-amino-acid chain: Ribonucleoside-diphosphate reductase large subunit (1144 aa).

Residues 1 to 33 are disordered; it reads MANRPAASALAGARSPSERQEPREPEVAPPGGD. Positions 16–26 are enriched in basic and acidic residues; the sequence is PSERQEPREPE. The RIP homotypic interaction motif (RHIM) motif lies at 55–75; sequence AYRISDSSFVQCGSNCSMIID. Residues 118 to 324 form a disordered region; sequence SGPSATTSVG…TDPGYPVPLE (207 aa). Residues 119–132 are compositionally biased toward polar residues; sequence GPSATTSVGTQTSG. Pro residues predominate over residues 141–159; it reads TPEPQGPQAVPPPPPPPFP. Positions 164–179 are enriched in basic and acidic residues; the sequence is CCARRDARGGAEKDVG. The segment covering 192 to 204 has biased composition (acidic residues); that stretch reads SETEDSDSSDEDT. Low complexity-rich tracts occupy residues 205 to 216 and 279 to 305; these read GSGSETLSRSSS and GSAT…DVAP. Substrate is bound by residues threonine 573, 588–589, glycine 619, 798–802, and 975–979; these read SC, NLCTE, and PTAAS. A disulfide bond links cysteine 589 and cysteine 815. Asparagine 798 acts as the Proton acceptor in catalysis. Cysteine 800 (cysteine radical intermediate) is an active-site residue. The active-site Proton acceptor is glutamate 802.

This sequence belongs to the ribonucleoside diphosphate reductase large chain family. In terms of assembly, heterotetramer composed of a homodimer of the large subunit (R1) and a homodimer of the small subunit (R2). Larger multisubunit protein complex are also active, composed of (R1)n(R2)n. May self-assemble (via RIP homotypic interaction motif/RHIM) into homomeric fibrillar amyloid structures. Interacts (via RHIM) with human RIPK1 (via RHIM). Interacts (via RHIM) with human RIPK3 (via RHIM). May interact (via RHIM) with human ZBP1 (via RHIM). Interacts (via C-terminus) with host CASP8.

It carries out the reaction a 2'-deoxyribonucleoside 5'-diphosphate + [thioredoxin]-disulfide + H2O = a ribonucleoside 5'-diphosphate + [thioredoxin]-dithiol. Functionally, ribonucleoside-diphosphate reductase holoenzyme that provides the precursors necessary for viral DNA synthesis. Allows virus growth in non-dividing cells, as well as reactivation from latency in infected hosts. Catalyzes the biosynthesis of deoxyribonucleotides from the corresponding ribonucleotides. The N-terminal region confers antiapoptotic activity in differentiated cells such as neurons and is important for viral reactivation to increase neural survivability. Prevents host necroptosis by targeting host RIPK1 and RIPK3, thereby hampering the formation of necroptotic RIPK1-RIPK3 complexes. May form hetero-amyloid structures with host proteins RIPK3 or ZBP1, thereby preventing RIPK3- and ZBP1-mediated necroptosis. In addition, inhibits extrinsic apoptosis by targeting host CASP8. This chain is Ribonucleoside-diphosphate reductase large subunit, found in Homo sapiens (Human).